The chain runs to 429 residues: Histidine--tRNA ligase (429 aa).

Belongs to the class-II aminoacyl-tRNA synthetase family. As to quaternary structure, homodimer.

The protein localises to the cytoplasm. The enzyme catalyses tRNA(His) + L-histidine + ATP = L-histidyl-tRNA(His) + AMP + diphosphate + H(+). The protein is Histidine--tRNA ligase of Oceanobacillus iheyensis (strain DSM 14371 / CIP 107618 / JCM 11309 / KCTC 3954 / HTE831).